The sequence spans 131 residues: Ribosome-binding factor A (131 aa).

This sequence belongs to the RbfA family. In terms of assembly, monomer. Binds 30S ribosomal subunits, but not 50S ribosomal subunits or 70S ribosomes.

It is found in the cytoplasm. One of several proteins that assist in the late maturation steps of the functional core of the 30S ribosomal subunit. Associates with free 30S ribosomal subunits (but not with 30S subunits that are part of 70S ribosomes or polysomes). Required for efficient processing of 16S rRNA. May interact with the 5'-terminal helix region of 16S rRNA. In Thermotoga maritima (strain ATCC 43589 / DSM 3109 / JCM 10099 / NBRC 100826 / MSB8), this protein is Ribosome-binding factor A.